The primary structure comprises 367 residues: Regulator of fusion ref-1 (367 aa).

Over residues 1–10 (MVLISTPPPA) the composition is skewed to pro residues. Residues 1-24 (MVLISTPPPAYAHNRKTSQEKKRR) are disordered. Residues 11 to 24 (YAHNRKTSQEKKRR) are basic motif 1. Positions 11–63 (YAHNRKTSQEKKRRDEINAKIKELQLLIQNESDNEKMTQGDVLNRAVEVVSRM) constitute a bHLH 1 domain. The segment at 25-63 (DEINAKIKELQLLIQNESDNEKMTQGDVLNRAVEVVSRM) is helix-loop-helix motif 1. Disordered regions lie at residues 133-177 (RSES…RRDR) and 313-367 (ATSP…RPWE). Low complexity predominate over residues 141-157 (SSMSYRSQSSSPSTSES). Over residues 161–177 (IDRKEVKKNREQDRRDR) the composition is skewed to basic and acidic residues. The segment at 162–175 (DRKEVKKNREQDRR) is basic motif 2. The 58-residue stretch at 162–219 (DRKEVKKNREQDRRDRQGEAFDALKNFIIENKLMTSHQVEKMQRLNTLDIIIAYIQNK) folds into the bHLH 2 domain. The helix-loop-helix motif 2 stretch occupies residues 176-219 (DRQGEAFDALKNFIIENKLMTSHQVEKMQRLNTLDIIIAYIQNK). The span at 313–354 (ATSPKSQQSPSYSLDSPPPSSDTSSSSIETPSTPNENSNSNP) shows a compositional bias: low complexity. A compositionally biased stretch (basic residues) spans 356–367 (ASRKSKLFRPWE).

Interacts with unc-37.

Its subcellular location is the nucleus. In terms of biological role, probable transcription factor. Binds 5'-TGCCACGTGTCCA-3' in vitro, probably via the E-box motif 5'-CA[TC][AG]TG-3'. Acts in embryonic development in a Notch-dependent manner, perhaps as a direct target of transcriptional regulator lag-1 in the Notch signaling pathway. Also acts in embryonic development in a Notch-independent manner. Plays a role in both Notch-dependent and -independent pathways in the execution of neuronal lineage decisions in the embryo. Also involved in regulating cell fate leading to formation of neuronal structures known as postdeirids. Involved in the pattern of cell fusion with a large syncytium known as hyp-7, during larval development, in hermaphrodites. Plays a role in regulating the activity of homeobox protein mab-5 in Pn.p cells. The polypeptide is Regulator of fusion ref-1 (Caenorhabditis elegans).